The primary structure comprises 349 residues: Ornithine carbamoyltransferase, mitochondrial (349 aa).

Carbamoyl phosphate-binding positions include 73-76 (STRT), Arg-124, His-151, and Gln-154. Residues Asn-195, Asp-261, Ser-265, and Met-266 each contribute to the L-ornithine site. The active-site Proton acceptor is the Cys-303. Carbamoyl phosphate contacts are provided by residues 303-304 (CL) and Arg-330.

This sequence belongs to the aspartate/ornithine carbamoyltransferase superfamily. OTCase family. Homotrimer.

It localises to the mitochondrion matrix. The enzyme catalyses carbamoyl phosphate + L-ornithine = L-citrulline + phosphate + H(+). It functions in the pathway amino-acid biosynthesis; L-arginine biosynthesis; L-arginine from L-ornithine and carbamoyl phosphate: step 1/3. The chain is Ornithine carbamoyltransferase, mitochondrial from Coccidioides immitis (strain RS) (Valley fever fungus).